A 78-amino-acid chain; its full sequence is Translational regulator CsrA (78 aa).

This sequence belongs to the CsrA/RsmA family. As to quaternary structure, homodimer; the beta-strands of each monomer intercalate to form a hydrophobic core, while the alpha-helices form wings that extend away from the core.

The protein localises to the cytoplasm. Functionally, a translational regulator that binds mRNA to regulate translation initiation and/or mRNA stability. Usually binds in the 5'-UTR at or near the Shine-Dalgarno sequence preventing ribosome-binding, thus repressing translation. Its main target seems to be the major flagellin gene, while its function is anatagonized by FliW. This is Translational regulator CsrA from Borrelia hermsii (strain HS1 / DAH).